We begin with the raw amino-acid sequence, 335 residues long: Fructose-1,6-bisphosphatase class 1 (335 aa).

4 residues coordinate Mg(2+): E91, D113, L115, and D116. Residues 116–119 (DGSS), N208, and K274 contribute to the substrate site. Mg(2+) is bound at residue E280.

This sequence belongs to the FBPase class 1 family. Homotetramer. It depends on Mg(2+) as a cofactor.

Its subcellular location is the cytoplasm. The enzyme catalyses beta-D-fructose 1,6-bisphosphate + H2O = beta-D-fructose 6-phosphate + phosphate. It functions in the pathway carbohydrate biosynthesis; gluconeogenesis. This is Fructose-1,6-bisphosphatase class 1 from Chromobacterium violaceum (strain ATCC 12472 / DSM 30191 / JCM 1249 / CCUG 213 / NBRC 12614 / NCIMB 9131 / NCTC 9757 / MK).